Reading from the N-terminus, the 68-residue chain is DNA-directed RNA polymerase subunit Rpo10 (68 aa).

Residues C7, C10, C44, and C45 each coordinate Zn(2+).

This sequence belongs to the archaeal Rpo10/eukaryotic RPB10 RNA polymerase subunit family. In terms of assembly, part of the RNA polymerase complex. Requires Zn(2+) as cofactor.

It is found in the cytoplasm. The enzyme catalyses RNA(n) + a ribonucleoside 5'-triphosphate = RNA(n+1) + diphosphate. DNA-dependent RNA polymerase (RNAP) catalyzes the transcription of DNA into RNA using the four ribonucleoside triphosphates as substrates. This is DNA-directed RNA polymerase subunit Rpo10 from Methanococcus maripaludis (strain C6 / ATCC BAA-1332).